The following is a 597-amino-acid chain: Elongation factor 4 (597 aa).

A tr-type G domain is found at 2–184 (KNIRNFSIIA…TIVAKVPAPE (183 aa)). Residues 14–19 (DHGKST) and 131–134 (NKID) each bind GTP.

It belongs to the TRAFAC class translation factor GTPase superfamily. Classic translation factor GTPase family. LepA subfamily.

It localises to the cell inner membrane. The catalysed reaction is GTP + H2O = GDP + phosphate + H(+). Its function is as follows. Required for accurate and efficient protein synthesis under certain stress conditions. May act as a fidelity factor of the translation reaction, by catalyzing a one-codon backward translocation of tRNAs on improperly translocated ribosomes. Back-translocation proceeds from a post-translocation (POST) complex to a pre-translocation (PRE) complex, thus giving elongation factor G a second chance to translocate the tRNAs correctly. Binds to ribosomes in a GTP-dependent manner. In Francisella tularensis subsp. mediasiatica (strain FSC147), this protein is Elongation factor 4.